The chain runs to 184 residues: UPF0149 protein PSPTO_5224 (184 aa).

The protein belongs to the UPF0149 family.

This Pseudomonas syringae pv. tomato (strain ATCC BAA-871 / DC3000) protein is UPF0149 protein PSPTO_5224.